A 274-amino-acid chain; its full sequence is NAD(P)H dehydrogenase [quinone] 1 (274 aa).

Alanine 2 is subject to N-acetylalanine. FAD-binding positions include histidine 12, 18–19 (FN), and glutamine 67. A Phosphoserine modification is found at serine 82. 104-107 (LYWF) contributes to the FAD binding site. 126-128 (AYT) contacts substrate. Residues 148–151 (TTGG), tyrosine 156, and arginine 201 contribute to the FAD site. Residues 225–274 (PSSLFDLNFQAGFLLKKEVQEEQKKNKFGLSVGHHLGKSIPADNQIKARK) form an important for apoenzyme conformational stability region. A Glycyl lysine isopeptide (Lys-Gly) (interchain with G-Cter in SUMO2) cross-link involves residue lysine 251.

This sequence belongs to the NAD(P)H dehydrogenase (quinone) family. As to quaternary structure, homodimer. Interacts with PDLIM4 isoform 2; this interaction stabilizes PDLIM4 isoform 2 in response to oxidative stress and protects it from ubiquitin-independent degradation by the core 20S proteasome. Interacts with TP73 (via SAM domain); this interaction is NADH-dependent, stabilizes TP73 in response to oxidative stress and protects it from ubiquitin-independent degradation by the 20S proteasome. Interacts with TP53; this interaction is NADH-dependent, stabilizes TP53 in response to oxidative stress and protects it from ubiquitin-independent degradation by the 20S proteasome. FAD is required as a cofactor.

It localises to the cytoplasm. The protein resides in the cytosol. The enzyme catalyses a quinone + NADH + H(+) = a quinol + NAD(+). The catalysed reaction is a quinone + NADPH + H(+) = a quinol + NADP(+). It carries out the reaction ubiquinone-10 + NADH + H(+) = ubiquinol-10 + NAD(+). It catalyses the reaction menadione + NADH + H(+) = menadiol + NAD(+). Flavin-containing quinone reductase that catalyzes two-electron reduction of quinones to hydroquinones using either NADH or NADPH as electron donors. In a ping-pong kinetic mechanism, the electrons are sequentially transferred from NAD(P)H to flavin cofactor and then from reduced flavin to the quinone, bypassing the formation of semiquinone and reactive oxygen species. Regulates cellular redox state primarily through quinone detoxification. Reduces components of plasma membrane redox system such as coenzyme Q and vitamin quinones, producing antioxidant hydroquinone forms. In the process may function as superoxide scavenger to prevent hydroquinone oxidation and facilitate excretion. Alternatively, can activate quinones and their derivatives by generating redox reactive hydroquinones with DNA cross-linking antitumor potential. Acts as a gatekeeper of the core 20S proteasome known to degrade proteins with unstructured regions. Upon oxidative stress, interacts with tumor suppressors TP53 and TP73 in a NADH-dependent way and inhibits their ubiquitin-independent degradation by the 20S proteasome. This chain is NAD(P)H dehydrogenase [quinone] 1 (Nqo1), found in Rattus norvegicus (Rat).